A 257-amino-acid polypeptide reads, in one-letter code: Imidazole glycerol phosphate synthase subunit HisF (257 aa).

Catalysis depends on residues D12 and D131.

The protein belongs to the HisA/HisF family. As to quaternary structure, heterodimer of HisH and HisF.

Its subcellular location is the cytoplasm. It carries out the reaction 5-[(5-phospho-1-deoxy-D-ribulos-1-ylimino)methylamino]-1-(5-phospho-beta-D-ribosyl)imidazole-4-carboxamide + L-glutamine = D-erythro-1-(imidazol-4-yl)glycerol 3-phosphate + 5-amino-1-(5-phospho-beta-D-ribosyl)imidazole-4-carboxamide + L-glutamate + H(+). It participates in amino-acid biosynthesis; L-histidine biosynthesis; L-histidine from 5-phospho-alpha-D-ribose 1-diphosphate: step 5/9. IGPS catalyzes the conversion of PRFAR and glutamine to IGP, AICAR and glutamate. The HisF subunit catalyzes the cyclization activity that produces IGP and AICAR from PRFAR using the ammonia provided by the HisH subunit. In Burkholderia vietnamiensis (strain G4 / LMG 22486) (Burkholderia cepacia (strain R1808)), this protein is Imidazole glycerol phosphate synthase subunit HisF.